The sequence spans 512 residues: Cytochrome P450 26B1 (512 aa).

Cys441 provides a ligand contact to heme.

The protein belongs to the cytochrome P450 family. It depends on heme as a cofactor.

It is found in the endoplasmic reticulum membrane. Its subcellular location is the microsome membrane. It catalyses the reaction all-trans-retinoate + reduced [NADPH--hemoprotein reductase] + O2 = all-trans-4-hydroxyretinoate + oxidized [NADPH--hemoprotein reductase] + H2O + H(+). It carries out the reaction all-trans-retinoate + reduced [NADPH--hemoprotein reductase] + O2 = all-trans-18-hydroxyretinoate + oxidized [NADPH--hemoprotein reductase] + H2O + H(+). A cytochrome P450 monooxygenase involved in the metabolism of retinoates (RAs), the active metabolites of vitamin A, and critical signaling molecules in animals. RAs exist as at least four different isomers: all-trans-RA (atRA), 9-cis-RA, 13-cis-RA, and 9,13-dicis-RA, where atRA is considered to be the biologically active isomer, although 9-cis-RA and 13-cis-RA also have activity. Catalyzes the hydroxylation of atRA primarily at C-4 and C-18, thereby contributing to the regulation of atRA homeostasis and signaling. Hydroxylation of atRA limits its biological activity and initiates a degradative process leading to its eventual elimination. Involved in the convertion of atRA to all-trans-4-oxo-RA. Can oxidize all-trans-13,14-dihydroretinoate (DRA) to metabolites which could include all-trans-4-oxo-DRA, all-trans-4-hydroxy-DRA, all-trans-5,8-epoxy-DRA, and all-trans-18-hydroxy-DRA. Shows preference for the following substrates: atRA &gt; 9-cis-RA &gt; 13-cis-RA. Plays a central role in germ cell development: acts by degrading RAs in the developing testis, preventing STRA8 expression, thereby leading to delay of meiosis. Required for the maintenance of the undifferentiated state of male germ cells during embryonic development in Sertoli cells, inducing arrest in G0 phase of the cell cycle and preventing meiotic entry. Plays a role in skeletal development, both at the level of patterning and in the ossification of bone and the establishment of some synovial joints. Essential for postnatal survival. Its function is as follows. Also has a significant activity in oxidation of tazarotenic acid and may therefore metabolize that xenobiotic in vivo. In Bos taurus (Bovine), this protein is Cytochrome P450 26B1 (CYP26B1).